Reading from the N-terminus, the 124-residue chain is Fluoride-specific ion channel FluC (124 aa).

A run of 4 helical transmembrane segments spans residues 4–24, 36–56, 63–83, and 100–120; these read YLVI…TGVY, GTLI…ILFL, PLWR…LSSI, and LLNI…GIVL. Na(+)-binding residues include glycine 75 and threonine 78.

This sequence belongs to the fluoride channel Fluc/FEX (TC 1.A.43) family.

It is found in the cell inner membrane. It catalyses the reaction fluoride(in) = fluoride(out). With respect to regulation, na(+) is not transported, but it plays an essential structural role and its presence is essential for fluoride channel function. Fluoride-specific ion channel. Important for reducing fluoride concentration in the cell, thus reducing its toxicity. In Sulfurihydrogenibium sp. (strain YO3AOP1), this protein is Fluoride-specific ion channel FluC.